Here is a 331-residue protein sequence, read N- to C-terminus: tRNA N6-adenosine threonylcarbamoyltransferase (331 aa).

A divalent metal cation contacts are provided by H108, H112, and Y129. Substrate-binding positions include Y129–G133, D161, G176, E180, and N261. An a divalent metal cation-binding site is contributed by D289.

Belongs to the KAE1 / TsaD family. Component of the EKC/KEOPS complex composed of at least BUD32, CGI121, GON7, KAE1 and PCC1; the whole complex dimerizes. The cofactor is a divalent metal cation.

Its subcellular location is the cytoplasm. The protein localises to the nucleus. The enzyme catalyses L-threonylcarbamoyladenylate + adenosine(37) in tRNA = N(6)-L-threonylcarbamoyladenosine(37) in tRNA + AMP + H(+). Its function is as follows. Component of the EKC/KEOPS complex that is required for the formation of a threonylcarbamoyl group on adenosine at position 37 (t(6)A37) in tRNAs that read codons beginning with adenine. The complex is probably involved in the transfer of the threonylcarbamoyl moiety of threonylcarbamoyl-AMP (TC-AMP) to the N6 group of A37. KAE1 likely plays a direct catalytic role in this reaction, but requires other protein(s) of the complex to fulfill this activity. The EKC/KEOPS complex also promotes both telomere uncapping and telomere elongation. The complex is required for efficient recruitment of transcriptional coactivators. This chain is tRNA N6-adenosine threonylcarbamoyltransferase, found in Encephalitozoon cuniculi (strain GB-M1) (Microsporidian parasite).